The primary structure comprises 71 residues: Putative antitoxin VapB15 (71 aa).

It belongs to the UPF0330 family.

Functionally, possibly the antitoxin component of a type II toxin-antitoxin (TA) system. Its cognate toxin is VapC15 (Potential). The chain is Putative antitoxin VapB15 (vapB15) from Archaeoglobus fulgidus (strain ATCC 49558 / DSM 4304 / JCM 9628 / NBRC 100126 / VC-16).